The following is a 491-amino-acid chain: Cytochrome P450 monooxygenase 521A1 (491 aa).

A helical membrane pass occupies residues 1–21 (MILLTLLYLIIFYIIIDFIKK). Cysteine 438 serves as a coordination point for heme.

Belongs to the cytochrome P450 family. Heme is required as a cofactor.

The protein localises to the membrane. The enzyme catalyses discoidol + reduced [NADPH--hemoprotein reductase] + O2 = discodiene + acetone + oxidized [NADPH--hemoprotein reductase] + 2 H2O + H(+). It functions in the pathway sesquiterpene biosynthesis. Cytochrome P450 monooxygenase; part of the gene cluster that mediates the biosynthesis of the trisnorsesquiterpene discodiene which has a function during later stages of multicellular development, during the transition from fingers to Mexican hats. The terpene synthase tps8 converts its substrate farnesyl diphosphate (FDP) into the bicyclic sesquiterpene alcohol discoidol. The cytochrome P450 monooxygenase cyp521A1 then catalyzes the oxidative degradation of discoidol to form the trisnorsesquiterpene discodiene. This chain is Cytochrome P450 monooxygenase 521A1 (cyp521A1), found in Dictyostelium discoideum (Social amoeba).